A 269-amino-acid chain; its full sequence is Chymotrypsin-like elastase family member 2B (269 aa).

Residues 1 to 16 form the signal peptide; sequence MIRTLLLSTLVAGALS. A propeptide spans 17–28 (activation peptide); sequence CGVSTYAPDMSR. In terms of domain architecture, Peptidase S1 spans 29-267; that stretch reads MLGGEEARPN…YNDWINSVIA (239 aa). Cysteine 58 and cysteine 74 form a disulfide bridge. Catalysis depends on charge relay system residues histidine 73 and aspartate 121. 3 disulfides stabilise this stretch: cysteine 155/cysteine 222, cysteine 186/cysteine 202, and cysteine 212/cysteine 243. Catalysis depends on serine 216, which acts as the Charge relay system.

Belongs to the peptidase S1 family. Elastase subfamily. In terms of tissue distribution, pancreas.

It localises to the secreted. The enzyme catalyses Preferential cleavage: Leu-|-Xaa, Met-|-Xaa and Phe-|-Xaa. Hydrolyzes elastin.. Its function is as follows. Acts upon elastin. The chain is Chymotrypsin-like elastase family member 2B (CELA2B) from Homo sapiens (Human).